The primary structure comprises 218 residues: N-(5'-phosphoribosyl)anthranilate isomerase (218 aa).

It belongs to the TrpF family.

The enzyme catalyses N-(5-phospho-beta-D-ribosyl)anthranilate = 1-(2-carboxyphenylamino)-1-deoxy-D-ribulose 5-phosphate. It participates in amino-acid biosynthesis; L-tryptophan biosynthesis; L-tryptophan from chorismate: step 3/5. The polypeptide is N-(5'-phosphoribosyl)anthranilate isomerase (Acetivibrio thermocellus (strain ATCC 27405 / DSM 1237 / JCM 9322 / NBRC 103400 / NCIMB 10682 / NRRL B-4536 / VPI 7372) (Clostridium thermocellum)).